Consider the following 289-residue polypeptide: O-methyltransferase asqN (289 aa).

Aspartate 155 lines the S-adenosyl-L-methionine pocket. Histidine 195 acts as the Proton acceptor in catalysis.

The protein belongs to the class I-like SAM-binding methyltransferase superfamily. Cation-independent O-methyltransferase family.

Its pathway is secondary metabolite biosynthesis. It participates in alkaloid biosynthesis. It functions in the pathway mycotoxin biosynthesis. In terms of biological role, O-methyltransferase; part of the gene cluster that mediates the biosynthesis of the aspoquinolone mycotoxins. The role of asqN within the aspoquinolone pathway has still to be determined. The first step of the pathway is catalyzed by the nonribosomal peptide synthetase asqK that condenses anthranilic acid and O-methyl-L-tyrosine to produce 4'-methoxycyclopeptin. 4'-methoxycyclopeptin is then converted to 4'-methoxydehydrocyclopeptin by the ketoglutarate-dependent dioxygenase asqJ. AsqJ also converts its first product 4'-methoxydehydrocyclopeptin to 4'-methoxycyclopenin. The following conversion of 4'-methoxycyclopenin into 4'-methoxyviridicatin is catalyzed by the cyclopenase asqI. 4'-methoxyviridicatin is the precursor of quinolone natural products, and is further converted to quinolinone B. The prenyltransferase asqH1 then catalyzes the canonical Friedel-Crafts alkylation of quinolinone B with dimethylallyl cation to yield dimethylallyl quinolone, which is subjected to FAD-dependent dehydrogenation by the FAD-linked oxidoreductase asqF to yield conjugated aryl diene. The delta(3') double bond then serves as the site of the second alkylation with DMAPP catalyzed by the prenyltransferase asqH2 to yield a carbenium ion intermediate, which can be attacked by H(2)O to yield a styrenyl quinolone containing a C3'-hydroxyprenyl chain. The FAD-dependent monooxygenase asqG performs epoxidation of the terminal C7'-C8' olefin. Finally, after dehydratation of the epoxide at C3 by asqC, the quinolone epoxide rearrangement protein asqO catalyzes an enzymatic 3-exo-tet cyclization to yield the cyclopropyl-THF ring system in aspoquinolone. The polypeptide is O-methyltransferase asqN (Emericella nidulans (strain FGSC A4 / ATCC 38163 / CBS 112.46 / NRRL 194 / M139) (Aspergillus nidulans)).